A 128-amino-acid chain; its full sequence is Small ribosomal subunit protein bS6 (128 aa).

Positions 97 to 128 (TTPSPMMKEEKSRSLTAAPATDEAKPAEAESA) are disordered. A compositionally biased stretch (basic and acidic residues) spans 118–128 (DEAKPAEAESA).

The protein belongs to the bacterial ribosomal protein bS6 family.

Its function is as follows. Binds together with bS18 to 16S ribosomal RNA. This Aromatoleum aromaticum (strain DSM 19018 / LMG 30748 / EbN1) (Azoarcus sp. (strain EbN1)) protein is Small ribosomal subunit protein bS6.